The following is a 254-amino-acid chain: Alcohol dehydrogenase (254 aa).

10–33 (FVAGLGGIGLDTSRELVKRNLKNL) serves as a coordination point for NAD(+). Serine 138 serves as a coordination point for substrate. Catalysis depends on tyrosine 151, which acts as the Proton acceptor.

This sequence belongs to the short-chain dehydrogenases/reductases (SDR) family. Homodimer.

The enzyme catalyses a primary alcohol + NAD(+) = an aldehyde + NADH + H(+). It catalyses the reaction a secondary alcohol + NAD(+) = a ketone + NADH + H(+). This is Alcohol dehydrogenase (Adh) from Drosophila pseudoobscura pseudoobscura (Fruit fly).